The sequence spans 268 residues: Interleukin-2 receptor subunit alpha (268 aa).

The N-terminal stretch at 1–21 (MEPCLLMWGILTFITVSGYTT) is a signal peptide. The Sushi 1 domain maps to 22-81 (DLCDDDPPNLKHATFKALTYKTGTVLNCDCERGFRRISSYMHCTGNSSHASWENKCRCKS). Residues 22 to 237 (DLCDDDPPNL…ESFIFTTEYQ (216 aa)) lie on the Extracellular side of the membrane. Cystine bridges form between cysteine 24–cysteine 64, cysteine 49–cysteine 77, and cysteine 51–cysteine 79. An N-linked (GlcNAc...) asparagine glycan is attached at asparagine 67. The disordered stretch occupies residues 83 to 112 (SPENRKGKVTTKPEEQKGENPTEMQSQTPP). A compositionally biased stretch (basic and acidic residues) spans 85 to 102 (ENRKGKVTTKPEEQKGEN). One can recognise a Sushi 2 domain in the interval 120 to 183 (GHCREPPPWE…WTQPPLKCIS (64 aa)). Intrachain disulfides connect cysteine 122/cysteine 165 and cysteine 149/cysteine 181. A disordered region spans residues 186–213 (QFPDDEELQASTDAPAGRDTSSPFITTS). Residues 204-213 (DTSSPFITTS) show a composition bias toward polar residues. A helical transmembrane segment spans residues 238–258 (IAVASCVLLLISIVLLSGLTW). The Cytoplasmic segment spans residues 259–268 (QRRRRKSRTI).

Non-covalent dimer of an alpha and a beta subunit. IL2R exists in 3 different forms: a high affinity dimer, an intermediate affinity monomer (beta subunit), and a low affinity monomer (alpha subunit). The high and intermediate affinity forms also associate with a gamma subunit.

The protein resides in the membrane. Its function is as follows. Receptor for interleukin-2. The receptor is involved in the regulation of immune tolerance by controlling regulatory T cells (TREGs) activity. TREGs suppress the activation and expansion of autoreactive T-cells. The chain is Interleukin-2 receptor subunit alpha (IL2RA) from Canis lupus familiaris (Dog).